Consider the following 82-residue polypeptide: Large ribosomal subunit protein uL23 (82 aa).

Belongs to the universal ribosomal protein uL23 family. As to quaternary structure, part of the 50S ribosomal subunit. Contacts protein L29.

In terms of biological role, binds to 23S rRNA. One of the proteins that surrounds the polypeptide exit tunnel on the outside of the ribosome. The sequence is that of Large ribosomal subunit protein uL23 from Sulfolobus acidocaldarius (strain ATCC 33909 / DSM 639 / JCM 8929 / NBRC 15157 / NCIMB 11770).